We begin with the raw amino-acid sequence, 164 residues long: Large ribosomal subunit protein uL15 (164 aa).

The span at 1-33 shows a compositional bias: basic residues; that stretch reads MTSKKRRQRGSRTHGGGTHKNRRGAGHRGGRGR. Disordered regions lie at residues 1–59 and 137–164; these read MTSK…PGAE and AGGS…NDEN. Residues 34–43 are compositionally biased toward basic and acidic residues; that stretch reads AGRDKHEQHN. Over residues 153 to 164 the composition is skewed to acidic residues; sequence GEDEEPNSNDEN.

Belongs to the universal ribosomal protein uL15 family. As to quaternary structure, part of the 50S ribosomal subunit.

Functionally, binds to the 23S rRNA. The protein is Large ribosomal subunit protein uL15 of Haloquadratum walsbyi (strain DSM 16790 / HBSQ001).